Here is a 517-residue protein sequence, read N- to C-terminus: Cytochrome P450 monooxygenase bsc11 (517 aa).

Residues 16–33 (ALPLTCTGLIIIFAFYLS) traverse the membrane as a helical segment. The N-linked (GlcNAc...) asparagine glycan is linked to asparagine 204. Cysteine 448 is a heme binding site.

Belongs to the cytochrome P450 family. Heme is required as a cofactor.

It is found in the membrane. It functions in the pathway mycotoxin biosynthesis. In terms of biological role, cytochrome P450 monooxygenase; part of the gene cluster that mediates the biosynthesis of the diterpene glucoside brassicicene C. In the first step of the brassicicene C biosynthesis, the bifunctional diterpene synthase bsc8 that possesses both prenyl transferase and terpene cyclase activity, converts isopentenyl diphosphate and dimethylallyl diphosphate into geranylgeranyl diphosphate (GGDP) that is further converted into fusicocca-2,10(14)-diene, the first precursor for brassicicene C. Fusicocca-2,10(14)-diene is then substrate of cytochrome P450 monooxygenase bsc1 for hydroxylation at the C-8 position. Oxidation at C-16 position to aldehyde is then catalyzed by the cytochrome P450 monooyxygenase bsc7, yielding fusicocca-2,10(14)-diene-8-beta,16-diol. Follows the isomerization of the double bond and reduction of aldehyde to alcohol catalyzed by the short-chain dehydrogenase/reductase bsc3 to yield the diol compound fusicocca-1,10(14)-diene-8 beta,16-diol. The next step is the oxidation at the C-3 position of fusicocca-2,10(14)-diene-8-beta,16-diol catalyzed by the alpha-ketoglutarate dependent dioxygenase bsc9, to produce a triol compound. Methylation of the hydroxy group at position 16 is performed by the methyltransferase bsc6. 16-O-methylation is followed by oxidation at the C-13 position to ketone and an alkyl shift of the methyl group leads to brassicicene C. Although the probable acetyltransferase bsc4 is included in the gene cluster, no acetylation reactions are necessary for brassicicene C biosynthesis. However, the fact that brassicicene E, which is a structurally related compound having an acetoxy group at position 12, was previously isolated from another strain of A.brassicicola suggests that the ATCC 96836 strain might also produce a small amount of brassicicene E. The chain is Cytochrome P450 monooxygenase bsc11 from Alternaria brassicicola (Dark leaf spot agent).